The chain runs to 158 residues: Transcription antitermination protein NusB (158 aa).

It belongs to the NusB family.

Functionally, involved in transcription antitermination. Required for transcription of ribosomal RNA (rRNA) genes. Binds specifically to the boxA antiterminator sequence of the ribosomal RNA (rrn) operons. The polypeptide is Transcription antitermination protein NusB (Bartonella henselae (strain ATCC 49882 / DSM 28221 / CCUG 30454 / Houston 1) (Rochalimaea henselae)).